Here is a 61-residue protein sequence, read N- to C-terminus: Metallothionein-II, hippocampal (61 aa).

At Met-1 the chain carries N-acetylmethionine. The beta stretch occupies residues 1–29 (MDPNCSCATGGSCTCANSCTCKACKCASC). The a divalent metal cation site is built by Cys-5, Cys-7, Cys-13, Cys-15, Cys-19, Cys-21, Cys-24, Cys-26, Cys-29, Cys-33, Cys-34, Cys-36, Cys-37, Cys-41, Cys-44, Cys-48, Cys-50, Cys-57, Cys-59, and Cys-60. The interval 30–61 (KKSCCSCCPVGCAKCAQGCICKGASDKCSCCA) is alpha.

This sequence belongs to the metallothionein superfamily. Type 1 family.

Its function is as follows. Metallothioneins have a high content of cysteine residues that bind various heavy metals; these proteins are transcriptionally regulated by both heavy metals and glucocorticoids. This isoform may play a role in regulating the transport, accumulation, and compartmentation of zinc in the hippocampus. This chain is Metallothionein-II, hippocampal, found in Bos taurus (Bovine).